The following is a 226-amino-acid chain: ATP synthase subunit a (226 aa).

5 helical membrane-spanning segments follow: residues 20-40 (LNWF…WLMP), 74-94 (FVSL…PYIF), 100-120 (LTLT…YGWI), 162-182 (LTAN…TGPM), and 187-207 (IILS…SAVA).

This sequence belongs to the ATPase A chain family. F-type ATPases have 2 components, CF(1) - the catalytic core - and CF(0) - the membrane proton channel. CF(1) has five subunits: alpha(3), beta(3), gamma(1), delta(1), epsilon(1). CF(0) has three main subunits: a, b and c.

Its subcellular location is the mitochondrion inner membrane. In terms of biological role, mitochondrial membrane ATP synthase (F(1)F(0) ATP synthase or Complex V) produces ATP from ADP in the presence of a proton gradient across the membrane which is generated by electron transport complexes of the respiratory chain. F-type ATPases consist of two structural domains, F(1) - containing the extramembraneous catalytic core and F(0) - containing the membrane proton channel, linked together by a central stalk and a peripheral stalk. During catalysis, ATP synthesis in the catalytic domain of F(1) is coupled via a rotary mechanism of the central stalk subunits to proton translocation. Key component of the proton channel; it may play a direct role in the translocation of protons across the membrane. This chain is ATP synthase subunit a (mt:ATPase6), found in Aedes albopictus (Asian tiger mosquito).